Reading from the N-terminus, the 256-residue chain is MLKIAVLLSVLACALAGTIPDGLLPQLDGRIVGGYETSIDAHPYQVSLQRFGSHFCGGSIYSHDIVITAAHCLQSVDAKDLKIRVGSTYWRSGGSVHSVRSFRNHEGYNARTMVNDIAIVRIESDLSFRSSIRAVRIADHNPREGATAVVSGWGTTESGGSTIPDHLLAVDLEIVDVSRCRSGEFGYGKKIKDTMLCAYAPNKDACQGDSGGPLVSGDRLVGVVSWGYGCGDVRYPGVYADVAHFHEWIERTAREV.

A signal peptide spans 1-22; it reads MLKIAVLLSVLACALAGTIPDG. Residues 23–30 constitute a propeptide, activation peptide; that stretch reads LLPQLDGR. The 224-residue stretch at 31 to 254 folds into the Peptidase S1 domain; that stretch reads IVGGYETSID…FHEWIERTAR (224 aa). Residues Cys56 and Cys72 are joined by a disulfide bond. Active-site charge relay system residues include His71 and Asp116. Intrachain disulfides connect Cys180-Cys197 and Cys206-Cys230. Residue Ser210 is the Charge relay system of the active site.

Belongs to the peptidase S1 family.

The protein localises to the secreted. Its subcellular location is the extracellular space. The enzyme catalyses Preferential cleavage: Arg-|-Xaa, Lys-|-Xaa.. This chain is Trypsin epsilon (epsilonTry), found in Drosophila erecta (Fruit fly).